A 145-amino-acid polypeptide reads, in one-letter code: Large ribosomal subunit protein uL16 (145 aa).

Basic residues predominate over residues 1 to 17 (MLMPKRVKHRKVQRGRM). The tract at residues 1-20 (MLMPKRVKHRKVQRGRMKGV) is disordered.

This sequence belongs to the universal ribosomal protein uL16 family. Part of the 50S ribosomal subunit.

Functionally, binds 23S rRNA and is also seen to make contacts with the A and possibly P site tRNAs. The protein is Large ribosomal subunit protein uL16 of Acetivibrio thermocellus (strain ATCC 27405 / DSM 1237 / JCM 9322 / NBRC 103400 / NCIMB 10682 / NRRL B-4536 / VPI 7372) (Clostridium thermocellum).